Consider the following 223-residue polypeptide: DNA replication complex GINS protein SLD5 (223 aa).

At M1 the chain carries N-acetylmethionine. The residue at position 2 (T2) is an N-acetylthreonine; in DNA replication complex GINS protein SLD5, N-terminally processed. Residues S12 and S16 each carry the phosphoserine modification. Positions 166–223 are important for GINS complex assembly; sequence DLDSYVFLRVKERQENILVEPEADEQRDYVIDLEVGSQHLIRYKTIAPLVASGAVQLI.

Belongs to the GINS4/SLD5 family. Component of the CMG helicase complex, a hexameric ring of related MCM2-7 subunits stabilized by CDC45 and the tetrameric GINS complex. Associated with ORC2. Interacts with HELB. In terms of tissue distribution, highly abundant in testis. Weakly expressed in thymus and bone marrow.

It localises to the nucleus. It is found in the chromosome. Its subcellular location is the cytoplasm. In terms of biological role, required for initiation of chromosomal DNA replication. Core component of CDC45-MCM-GINS (CMG) helicase, the molecular machine that unwinds template DNA during replication, and around which the replisome is built. This is DNA replication complex GINS protein SLD5 (Gins4) from Mus musculus (Mouse).